Reading from the N-terminus, the 102-residue chain is NADH-quinone oxidoreductase subunit K (102 aa).

3 consecutive transmembrane segments (helical) span residues 6 to 26 (LTGFMILAAGLFAAGVFGVLA), 30 to 50 (ILFQLIALEVALSGPALAFIA), and 63 to 83 (MFVLTLTLAAAEVAVGLALFL).

This sequence belongs to the complex I subunit 4L family. As to quaternary structure, NDH-1 is composed of 14 different subunits. Subunits NuoA, H, J, K, L, M, N constitute the membrane sector of the complex.

The protein resides in the cell inner membrane. The enzyme catalyses a quinone + NADH + 5 H(+)(in) = a quinol + NAD(+) + 4 H(+)(out). Functionally, NDH-1 shuttles electrons from NADH, via FMN and iron-sulfur (Fe-S) centers, to quinones in the respiratory chain. The immediate electron acceptor for the enzyme in this species is believed to be ubiquinone. Couples the redox reaction to proton translocation (for every two electrons transferred, four hydrogen ions are translocated across the cytoplasmic membrane), and thus conserves the redox energy in a proton gradient. This Rhodopseudomonas palustris (strain BisA53) protein is NADH-quinone oxidoreductase subunit K.